A 3431-amino-acid chain; its full sequence is KICSTOR complex protein SZT2 (3431 aa).

3 disordered regions span residues 699 to 731 (SKEP…PQQA), 1067 to 1101 (LRDP…TLPS), and 1162 to 1231 (KPKL…GADG). Positions 1082–1188 (VAKDRAGNST…ATGTKATESQ (107 aa)) are mediates interaction with the GATOR1 complex. Composition is skewed to polar residues over residues 1088-1101 (GNST…TLPS) and 1182-1212 (TKAT…TPSC). A Phosphoserine modification is found at Ser1275. Residues 1356–1378 (PPSPGPLSPGPFSSSIEEGPEPR) form a disordered region. Ser1415 is modified (phosphoserine). Disordered stretches follow at residues 1512–1534 (YRES…SDAD), 1629–1678 (PPAS…HPGL), 1806–1883 (RAED…PGET), 2113–2148 (PPSL…SDAV), 2450–2512 (TEAG…LEEG), 2735–2756 (ASPP…GGPL), and 2866–2899 (ETCA…DVPP). Thr1640 is modified (phosphothreonine). The span at 1641–1657 (SESSASFPRSPGQPSSL) shows a compositional bias: polar residues. Position 1650 is a phosphoserine (Ser1650). The span at 1832–1854 (PLISLPSLSQGGSQPGPSRGLSL) shows a compositional bias: low complexity. A compositionally biased stretch (polar residues) spans 2118 to 2129 (LSRSQEPISSED). Over residues 2460–2473 (TTDDIVLDRPEDTR) the composition is skewed to basic and acidic residues. Low complexity predominate over residues 2739-2749 (LSREQGRLSGS).

As to quaternary structure, part of the KICSTOR complex composed of KPTN, ITFG2, KICS2 and SZT2. SZT2 probably serves as a link between the other three proteins in the KICSTOR complex and may mediate the direct interaction with the GATOR complex via GATOR1. The KICSTOR complex interacts directly with the GATOR1 complex and most probably indirectly with the GATOR2 complex in an amino acid-independent manner. As to expression, mostly expressed in brain, spinal cord and lung.

The protein localises to the lysosome membrane. The protein resides in the peroxisome. As part of the KICSTOR complex functions in the amino acid-sensing branch of the TORC1 signaling pathway. Recruits, in an amino acid-independent manner, the GATOR1 complex to the lysosomal membranes and allows its interaction with GATOR2 and the RAG GTPases. Functions upstream of the RAG GTPases and is required to negatively regulate mTORC1 signaling in absence of amino acids. In absence of the KICSTOR complex mTORC1 is constitutively localized to the lysosome and activated. The KICSTOR complex is also probably involved in the regulation of mTORC1 by glucose. May play a role in the cellular response to oxidative stress. This Mus musculus (Mouse) protein is KICSTOR complex protein SZT2.